A 365-amino-acid chain; its full sequence is 3-isopropylmalate dehydrogenase (365 aa).

Substrate-binding residues include arginine 96, arginine 106, arginine 134, and aspartate 224. Residues aspartate 224, aspartate 248, and aspartate 252 each coordinate Mg(2+). Residue 288 to 300 (GSAPTIAKQNIAN) coordinates NAD(+).

It belongs to the isocitrate and isopropylmalate dehydrogenases family. LeuB type 1 subfamily. As to quaternary structure, homodimer. Mg(2+) serves as cofactor. It depends on Mn(2+) as a cofactor.

It localises to the cytoplasm. The enzyme catalyses (2R,3S)-3-isopropylmalate + NAD(+) = 4-methyl-2-oxopentanoate + CO2 + NADH. It participates in amino-acid biosynthesis; L-leucine biosynthesis; L-leucine from 3-methyl-2-oxobutanoate: step 3/4. Its function is as follows. Catalyzes the oxidation of 3-carboxy-2-hydroxy-4-methylpentanoate (3-isopropylmalate) to 3-carboxy-4-methyl-2-oxopentanoate. The product decarboxylates to 4-methyl-2 oxopentanoate. The polypeptide is 3-isopropylmalate dehydrogenase (Dehalococcoides mccartyi (strain CBDB1)).